The sequence spans 506 residues: Cytochrome P450 94B3 (506 aa).

A helical transmembrane segment spans residues 2-22 (AFLLSFLILAFLITIIFFLSS). Heme is bound at residue C447.

This sequence belongs to the cytochrome P450 family. It depends on heme as a cofactor.

It is found in the membrane. The protein localises to the endoplasmic reticulum membrane. It catalyses the reaction a jasmonyl-L-amino acid + reduced [NADPH--hemoprotein reductase] + O2 = a 12-hydroxyjasmonyl-L-alpha-amino acid + oxidized [NADPH--hemoprotein reductase] + H2O + H(+). The catalysed reaction is L-isoleucine-(+)-7-isojasmonate + NADPH + O2 + H(+) = L-isoleucine-(+)-12-hydroxy-7-isojasmonate + NADP(+) + H2O. It carries out the reaction a jasmonyl-L-isoleucinate + NADPH + O2 + H(+) = L-isoleucine-12-hydroxyjasmonate + NADP(+) + H2O. Functionally, hydroxylase involved in the oxidation of the plant hormone jasmonoyl-L-isoleucine (JA-Ile), a bioactive phytohormone of the jasmonate-mediated signaling pathway. Converts JA-Ile to 12-hydroxy-JA-Ile. Exerts negative feedback control on JA-Ile levels and plays a key role in attenuation of jasmonate responses. Negatively regulates the expression of wound-induced genes TIFY11A/JAZ5, TIFY5A/JAZ8 and TIFY5A/JAZ10. Catalyzes the hydroxylation of jasmonoyl-L-valine (JA-Val), jasmonoyl-L-leucine (JA-Leu) and jasmonoyl-L-phenylalanine (JA-Phe) in vitro. Converts JA-Val, JA-Leu and JA-Phe to 12-hydroxy-JA-Val, 12-hydroxy-JA-Leu and 12-hydroxy-JA-Phe, respectively. The polypeptide is Cytochrome P450 94B3 (Arabidopsis thaliana (Mouse-ear cress)).